Reading from the N-terminus, the 1104-residue chain is Carbamoyl phosphate synthase large chain (1104 aa).

Residues 1-403 are carboxyphosphate synthetic domain; the sequence is MPRRQDIQKI…SFQKALRSLE (403 aa). ATP-binding residues include R129, R170, G176, G177, Q209, L211, E216, G242, I243, H244, Q286, and E300. Residues 133 to 329 form the ATP-grasp 1 domain; that stretch reads NEAMDKIGVK…IAKMAAKLAV (197 aa). Residues Q286, E300, and N302 each coordinate Mg(2+). 3 residues coordinate Mn(2+): Q286, E300, and N302. The oligomerization domain stretch occupies residues 404-552; sequence TGRAGWGCDK…YSTYEEETEV (149 aa). The carbamoyl phosphate synthetic domain stretch occupies residues 553–966; it reads IPASKPKVMI…AFAKAELGAG (414 aa). The 198-residue stretch at 703–900 folds into the ATP-grasp 2 domain; sequence EKILQKLNIS…LAKLASLIMS (198 aa). 10 residues coordinate ATP: R739, K778, L780, E785, G811, I812, H813, S814, Q854, and E871. 3 residues coordinate Mg(2+): Q854, E871, and N873. Q854, E871, and N873 together coordinate Mn(2+). In terms of domain architecture, MGS-like spans 967–1104; the sequence is ERLPLTGTVF…KTIQEYCPNF (138 aa). Residues 967 to 1104 are allosteric domain; the sequence is ERLPLTGTVF…KTIQEYCPNF (138 aa).

Belongs to the CarB family. As to quaternary structure, composed of two chains; the small (or glutamine) chain promotes the hydrolysis of glutamine to ammonia, which is used by the large (or ammonia) chain to synthesize carbamoyl phosphate. Tetramer of heterodimers (alpha,beta)4. It depends on Mg(2+) as a cofactor. Requires Mn(2+) as cofactor.

It carries out the reaction hydrogencarbonate + L-glutamine + 2 ATP + H2O = carbamoyl phosphate + L-glutamate + 2 ADP + phosphate + 2 H(+). The enzyme catalyses hydrogencarbonate + NH4(+) + 2 ATP = carbamoyl phosphate + 2 ADP + phosphate + 2 H(+). It participates in amino-acid biosynthesis; L-arginine biosynthesis; carbamoyl phosphate from bicarbonate: step 1/1. Its pathway is pyrimidine metabolism; UMP biosynthesis via de novo pathway; (S)-dihydroorotate from bicarbonate: step 1/3. Its function is as follows. Large subunit of the glutamine-dependent carbamoyl phosphate synthetase (CPSase). CPSase catalyzes the formation of carbamoyl phosphate from the ammonia moiety of glutamine, carbonate, and phosphate donated by ATP, constituting the first step of 2 biosynthetic pathways, one leading to arginine and/or urea and the other to pyrimidine nucleotides. The large subunit (synthetase) binds the substrates ammonia (free or transferred from glutamine from the small subunit), hydrogencarbonate and ATP and carries out an ATP-coupled ligase reaction, activating hydrogencarbonate by forming carboxy phosphate which reacts with ammonia to form carbamoyl phosphate. The protein is Carbamoyl phosphate synthase large chain of Nostoc sp. (strain PCC 7120 / SAG 25.82 / UTEX 2576).